Consider the following 301-residue polypeptide: Probable 5-dehydro-4-deoxyglucarate dehydratase (301 aa).

It belongs to the DapA family.

It catalyses the reaction 5-dehydro-4-deoxy-D-glucarate + H(+) = 2,5-dioxopentanoate + CO2 + H2O. It functions in the pathway carbohydrate acid metabolism; D-glucarate degradation; 2,5-dioxopentanoate from D-glucarate: step 2/2. This is Probable 5-dehydro-4-deoxyglucarate dehydratase from Rhizobium meliloti (strain 1021) (Ensifer meliloti).